The primary structure comprises 497 residues: Glycerol kinase (497 aa).

Thr12 is an ADP binding site. ATP-binding residues include Thr12, Thr13, and Ser14. Position 12 (Thr12) interacts with sn-glycerol 3-phosphate. Residue Arg16 participates in ADP binding. Arg82, Glu83, Tyr133, and Asp243 together coordinate sn-glycerol 3-phosphate. Residues Arg82, Glu83, Tyr133, Asp243, and Gln244 each coordinate glycerol. ADP is bound by residues Thr265 and Gly308. ATP contacts are provided by Thr265, Gly308, Gln312, and Gly409. Gly409 serves as a coordination point for ADP.

Belongs to the FGGY kinase family.

The enzyme catalyses glycerol + ATP = sn-glycerol 3-phosphate + ADP + H(+). It functions in the pathway polyol metabolism; glycerol degradation via glycerol kinase pathway; sn-glycerol 3-phosphate from glycerol: step 1/1. Inhibited by fructose 1,6-bisphosphate (FBP). Functionally, key enzyme in the regulation of glycerol uptake and metabolism. Catalyzes the phosphorylation of glycerol to yield sn-glycerol 3-phosphate. This Dichelobacter nodosus (strain VCS1703A) protein is Glycerol kinase.